The following is a 38-amino-acid chain: Large ribosomal subunit protein bL36B (38 aa).

Belongs to the bacterial ribosomal protein bL36 family.

The protein is Large ribosomal subunit protein bL36B of Prochlorococcus marinus (strain MIT 9515).